The sequence spans 331 residues: MKKPVVIGLAIAAIVTVIAGGTWWYQSRQDDGLTLYGNVDIRTVNISFRVGGRLASLNVDEGDTIKAGQVLGELDHAPYENALMQAKAGVSVAQAQYDLMLAGYRDEEIAQAAAAVRQAQAAYDYAQNFYNRQQGLWKSRTISANDLENARSSRDQAQATLKSAQDKLSQYRTGNREQDIAQAKASLEQAKAQLAQAQLDLQDTTLIAPSNGTLLTRAVEPGSMLNAGSTVLTLSLTRPVWVRAYVDERNLSQTQPGREILLYTDGRPDKPYHGKIGFVSPTAEFTPKTVETPDLRTDLVYRLRIIVTDADDALRQGMPVTVKFNDEARHE.

The signal sequence occupies residues 1–19; that stretch reads MKKPVVIGLAIAAIVTVIA. Positions 107–208 form a coiled coil; sequence EEIAQAAAAV…LDLQDTTLIA (102 aa).

The protein belongs to the UPF0194 family.

The protein localises to the periplasm. This Salmonella arizonae (strain ATCC BAA-731 / CDC346-86 / RSK2980) protein is UPF0194 membrane protein YbhG.